A 214-amino-acid polypeptide reads, in one-letter code: MAELLNVKPTRMELLNLKRRIQLAKKGHKLLKDKQDALVMEFFTIYDEALQLRRELNLKMKEAFEALQMAEIDVGTLRLKEISLSVKPNREVEIRKRNVMAVPVPLIEAESFKRNAGERGYAFVSSSAKVDLVAEKFEEVLDLAVRLAEVEETLKRLAREIEVTKRRVNALEYIIIPRMEATVKFIKQRLDEMERENFFRLKRVKALIEARGGS.

It belongs to the V-ATPase D subunit family. Has multiple subunits with at least A(3), B(3), C, D, E, F, H, I and proteolipid K(x).

Its subcellular location is the cell membrane. Functionally, component of the A-type ATP synthase that produces ATP from ADP in the presence of a proton gradient across the membrane. The protein is A-type ATP synthase subunit D of Desulfurococcus sp. (strain SY).